Here is a 515-residue protein sequence, read N- to C-terminus: Heavy metal-associated isoprenylated plant protein 41 (515 aa).

In terms of domain architecture, HMA spans 376-444 (KQRIVLKMDM…KVCMTTIITV (69 aa)). At cysteine 512 the chain carries Cysteine methyl ester. A lipid anchor (S-farnesyl cysteine) is attached at cysteine 512. Residues 513-515 (RIL) constitute a propeptide, removed in mature form.

Belongs to the HIPP family.

Its function is as follows. Heavy-metal-binding protein. The protein is Heavy metal-associated isoprenylated plant protein 41 of Arabidopsis thaliana (Mouse-ear cress).